The sequence spans 550 residues: Vacuolar protein 8 (550 aa).

Gly-2 is lipidated: N-myristoyl glycine. Residues Cys-4 and Cys-7 are each lipidated (S-palmitoyl cysteine). ARM repeat units lie at residues 75-114 (TEKD…NLAV), 116-155 (AENK…NLAT), 157-196 (DENK…NMTH), 198-237 (YENR…NIAV), 241-280 (HRKR…NLAS), 282-321 (ERYQ…NISI), 323-363 (PLNE…NLAA), and 454-493 (FIEC…QLLE). Phosphothreonine is present on Thr-548. Ser-550 carries the phosphoserine modification.

This sequence belongs to the beta-catenin family.

The protein resides in the golgi apparatus membrane. The protein localises to the vacuole membrane. Its function is as follows. Functions in both vacuole inheritance and protein targeting from the cytoplasm to vacuole. The polypeptide is Vacuolar protein 8 (vac8) (Schizosaccharomyces pombe (strain 972 / ATCC 24843) (Fission yeast)).